A 104-amino-acid chain; its full sequence is Putative thioredoxin-4 (104 aa).

The Thioredoxin domain maps to 2-104 (SKVTNVSINT…QLRKILDSMK (103 aa)). Active-site nucleophile residues include C31 and C34. An intrachain disulfide couples C31 to C34.

It belongs to the thioredoxin family.

Participates in various redox reactions through the reversible oxidation of its active center dithiol to a disulfide and catalyzes dithiol-disulfide exchange reactions. The chain is Putative thioredoxin-4 (trxD) from Dictyostelium discoideum (Social amoeba).